An 899-amino-acid polypeptide reads, in one-letter code: Probable dipeptidyl-aminopeptidase B (899 aa).

Positions methionine 1–tyrosine 69 are disordered. Residues methionine 1–leucine 99 are Cytoplasmic-facing. A compositionally biased stretch (low complexity) spans aspartate 32–leucine 43. Residues isoleucine 100–phenylalanine 120 traverse the membrane as a helical; Signal-anchor for type II membrane protein segment. The Vacuolar segment spans residues valine 121 to histidine 899. The span at threonine 128 to proline 139 shows a compositional bias: polar residues. The disordered stretch occupies residues threonine 128 to proline 149. N-linked (GlcNAc...) asparagine glycosylation is found at asparagine 212, asparagine 308, and asparagine 360. Serine 765 functions as the Charge relay system in the catalytic mechanism. Residues asparagine 819, asparagine 824, and asparagine 827 are each glycosylated (N-linked (GlcNAc...) asparagine). Residues aspartate 842 and histidine 875 each act as charge relay system in the active site. A glycan (N-linked (GlcNAc...) asparagine) is linked at asparagine 893.

It belongs to the peptidase S9B family.

The protein resides in the vacuole membrane. The enzyme catalyses Release of an N-terminal dipeptide, Xaa-Yaa-|-Zaa-, from a polypeptide, preferentially when Yaa is Pro, provided Zaa is neither Pro nor hydroxyproline.. Functionally, type IV dipeptidyl-peptidase which removes N-terminal dipeptides sequentially from polypeptides having unsubstituted N-termini provided that the penultimate residue is proline. The protein is Probable dipeptidyl-aminopeptidase B (DAPB) of Trichophyton verrucosum (strain HKI 0517).